The chain runs to 277 residues: Diaminopimelate epimerase (277 aa).

Substrate contacts are provided by Asn15, Gln48, and Asn66. Cys75 functions as the Proton donor in the catalytic mechanism. Residues 76–77, Asn156, Asn189, and 207–208 contribute to the substrate site; these read GN and ER. The active-site Proton acceptor is the Cys216. 217–218 provides a ligand contact to substrate; that stretch reads GS.

It belongs to the diaminopimelate epimerase family. As to quaternary structure, homodimer.

It is found in the cytoplasm. It carries out the reaction (2S,6S)-2,6-diaminopimelate = meso-2,6-diaminopimelate. It functions in the pathway amino-acid biosynthesis; L-lysine biosynthesis via DAP pathway; DL-2,6-diaminopimelate from LL-2,6-diaminopimelate: step 1/1. Its function is as follows. Catalyzes the stereoinversion of LL-2,6-diaminopimelate (L,L-DAP) to meso-diaminopimelate (meso-DAP), a precursor of L-lysine and an essential component of the bacterial peptidoglycan. The polypeptide is Diaminopimelate epimerase (Acidiphilium cryptum (strain JF-5)).